Here is a 98-residue protein sequence, read N- to C-terminus: Acylphosphatase (98 aa).

One can recognise an Acylphosphatase-like domain in the interval 12-98; the sequence is TYYVRVRGVV…ERRFERFQQQ (87 aa). Active-site residues include Arg27 and Asn45.

It belongs to the acylphosphatase family.

It catalyses the reaction an acyl phosphate + H2O = a carboxylate + phosphate + H(+). The chain is Acylphosphatase (acyP) from Burkholderia lata (strain ATCC 17760 / DSM 23089 / LMG 22485 / NCIMB 9086 / R18194 / 383).